We begin with the raw amino-acid sequence, 395 residues long: MSVIPSPRPVSTLEPDNDFRDIHNWTELLHLFNQTFTDCHIEFNENTKHVVLFVFYLAIFVVGLVENVLVICVNCRRSGRVGMLNLYILNMAIADLGIILSLPVWMLEVMLEYTWLWGSFSCRFIHYFYLVNMYSSIFFLTCLSIDRYVTLTNTSPSWQRHQHRIRRAVCAGVWVLSAIIPLPEVVHIQLLDGSEPMCLFLAPFETYSAWALAVALSATILGFLLPFLLIAVFNILTACRLRRQRQTESRRHCLLMWAYIVVFAICWLPYQVTMLLLTLHGTHIFLHCHLVNLLYFFYEIIDCFSMLHCVANPILYNFLSPSFRGRLLSLVVRYLPKEQARAAGGRASSSSSTQHSIIITKEGSLPLQRISTPTPSETFRRPLRLQTPHLHSAIL.

The Extracellular segment spans residues 1–53 (MSVIPSPRPVSTLEPDNDFRDIHNWTELLHLFNQTFTDCHIEFNENTKHVVLF). Asn-24 and Asn-33 each carry an N-linked (GlcNAc...) asparagine glycan. A helical transmembrane segment spans residues 54–75 (VFYLAIFVVGLVENVLVICVNC). The Cytoplasmic segment spans residues 76–86 (RRSGRVGMLNL). Residues 87-109 (YILNMAIADLGIILSLPVWMLEV) form a helical membrane-spanning segment. Over 110–123 (MLEYTWLWGSFSCR) the chain is Extracellular. Cys-122 and Cys-198 are joined by a disulfide. A helical membrane pass occupies residues 124–145 (FIHYFYLVNMYSSIFFLTCLSI). Residues 146–166 (DRYVTLTNTSPSWQRHQHRIR) are Cytoplasmic-facing. The chain crosses the membrane as a helical span at residues 167–189 (RAVCAGVWVLSAIIPLPEVVHIQ). Residues 190–213 (LLDGSEPMCLFLAPFETYSAWALA) are Extracellular-facing. Residues 214–235 (VALSATILGFLLPFLLIAVFNI) traverse the membrane as a helical segment. The Cytoplasmic segment spans residues 236–254 (LTACRLRRQRQTESRRHCL). A helical membrane pass occupies residues 255–276 (LMWAYIVVFAICWLPYQVTMLL). Over 277–295 (LTLHGTHIFLHCHLVNLLY) the chain is Extracellular. A helical membrane pass occupies residues 296 to 316 (FFYEIIDCFSMLHCVANPILY). The Cytoplasmic portion of the chain corresponds to 317–395 (NFLSPSFRGR…QTPHLHSAIL (79 aa)). Position 329 is a phosphoserine (Ser-329).

It belongs to the G-protein coupled receptor 1 family. In terms of tissue distribution, expressed in liver and lung.

It localises to the cell membrane. In terms of biological role, orphan receptor. This is G-protein coupled receptor 182 (Gpr182) from Mus musculus (Mouse).